An 87-amino-acid polypeptide reads, in one-letter code: Small ribosomal subunit protein bS20 (87 aa).

A disordered region spans residues 1 to 25 (MANIKSAKKRAVQSEKHRLHNASRR).

Belongs to the bacterial ribosomal protein bS20 family.

Functionally, binds directly to 16S ribosomal RNA. This Baumannia cicadellinicola subsp. Homalodisca coagulata protein is Small ribosomal subunit protein bS20.